The following is a 216-amino-acid chain: Protein-L-isoaspartate O-methyltransferase (216 aa).

Ser-66 is a catalytic residue.

This sequence belongs to the methyltransferase superfamily. L-isoaspartyl/D-aspartyl protein methyltransferase family.

It is found in the cytoplasm. The enzyme catalyses [protein]-L-isoaspartate + S-adenosyl-L-methionine = [protein]-L-isoaspartate alpha-methyl ester + S-adenosyl-L-homocysteine. Catalyzes the methyl esterification of L-isoaspartyl residues in peptides and proteins that result from spontaneous decomposition of normal L-aspartyl and L-asparaginyl residues. It plays a role in the repair and/or degradation of damaged proteins. This Dechloromonas aromatica (strain RCB) protein is Protein-L-isoaspartate O-methyltransferase.